Here is a 75-residue protein sequence, read N- to C-terminus: Small ribosomal subunit protein bS21A (75 aa).

This sequence belongs to the bacterial ribosomal protein bS21 family.

The polypeptide is Small ribosomal subunit protein bS21A (rpsU1) (Agrobacterium fabrum (strain C58 / ATCC 33970) (Agrobacterium tumefaciens (strain C58))).